The primary structure comprises 224 residues: uncharacterized protein (224 aa).

Residues Gly-177, Ile-197, and Leu-206 each coordinate S-adenosyl-L-methionine.

It belongs to the class IV-like SAM-binding methyltransferase superfamily. RNA methyltransferase TrmH family.

This is an uncharacterized protein from Archaeoglobus fulgidus (strain ATCC 49558 / DSM 4304 / JCM 9628 / NBRC 100126 / VC-16).